We begin with the raw amino-acid sequence, 84 residues long: Small ribosomal subunit protein bS18 (84 aa).

This sequence belongs to the bacterial ribosomal protein bS18 family. As to quaternary structure, part of the 30S ribosomal subunit. Forms a tight heterodimer with protein bS6.

Its function is as follows. Binds as a heterodimer with protein bS6 to the central domain of the 16S rRNA, where it helps stabilize the platform of the 30S subunit. The sequence is that of Small ribosomal subunit protein bS18 from Mycobacterium sp. (strain JLS).